Reading from the N-terminus, the 160-residue chain is 2-C-methyl-D-erythritol 2,4-cyclodiphosphate synthase (160 aa).

A divalent metal cation-binding residues include Asp11 and His13. 4-CDP-2-C-methyl-D-erythritol 2-phosphate is bound by residues 11–13 and 37–38; these read DVH and HS. Residue His45 coordinates a divalent metal cation. Residues 59 to 61 and Arg145 each bind 4-CDP-2-C-methyl-D-erythritol 2-phosphate; that span reads DIG.

The protein belongs to the IspF family. Homotrimer. A divalent metal cation serves as cofactor.

It catalyses the reaction 4-CDP-2-C-methyl-D-erythritol 2-phosphate = 2-C-methyl-D-erythritol 2,4-cyclic diphosphate + CMP. It functions in the pathway isoprenoid biosynthesis; isopentenyl diphosphate biosynthesis via DXP pathway; isopentenyl diphosphate from 1-deoxy-D-xylulose 5-phosphate: step 4/6. Involved in the biosynthesis of isopentenyl diphosphate (IPP) and dimethylallyl diphosphate (DMAPP), two major building blocks of isoprenoid compounds. Catalyzes the conversion of 4-diphosphocytidyl-2-C-methyl-D-erythritol 2-phosphate (CDP-ME2P) to 2-C-methyl-D-erythritol 2,4-cyclodiphosphate (ME-CPP) with a corresponding release of cytidine 5-monophosphate (CMP). This Neisseria meningitidis serogroup A / serotype 4A (strain DSM 15465 / Z2491) protein is 2-C-methyl-D-erythritol 2,4-cyclodiphosphate synthase.